A 353-amino-acid polypeptide reads, in one-letter code: Peroxidase C1A (353 aa).

A signal peptide spans 1-30; it reads MHFSSSSTLFTCITLIPLVCLILHASLSDA. At Gln31 the chain carries Pyrrolidone carboxylic acid. Disulfide bonds link Cys41-Cys121, Cys74-Cys79, Cys127-Cys331, and Cys207-Cys239. Asn43 is a glycosylation site (N-linked (GlcNAc...) asparagine). His72 acts as the Proton acceptor in catalysis. Residues Asp73, Val76, Gly78, Asp80, and Ser82 each coordinate Ca(2+). An N-linked (GlcNAc...) asparagine glycan is attached at Asn87. Glu94 is a Ca(2+) binding site. A substrate-binding site is contributed by Pro169. Asn188 carries an N-linked (GlcNAc...) asparagine glycan. Heme b is bound at residue His200. Thr201 is a binding site for Ca(2+). Residues Asn216, Asn228, and Asn244 are each glycosylated (N-linked (GlcNAc...) asparagine). Ca(2+) contacts are provided by Asp252, Thr255, and Asp260. Residues Asn285 and Asn298 are each glycosylated (N-linked (GlcNAc...) asparagine). A propeptide spanning residues 339–353 is cleaved from the precursor; that stretch reads LLHDMVEVVDFVSSM.

This sequence belongs to the peroxidase family. Classical plant (class III) peroxidase subfamily. Monomer. Requires Ca(2+) as cofactor. Heme b is required as a cofactor.

The protein localises to the secreted. It is found in the vacuole. The catalysed reaction is 2 a phenolic donor + H2O2 = 2 a phenolic radical donor + 2 H2O. Its function is as follows. Removal of H(2)O(2), oxidation of toxic reductants, biosynthesis and degradation of lignin, suberization, auxin catabolism, response to environmental stresses such as wounding, pathogen attack and oxidative stress. These functions might be dependent on each isozyme/isoform in each plant tissue. The sequence is that of Peroxidase C1A (PRXC1A) from Armoracia rusticana (Horseradish).